Consider the following 89-residue polypeptide: Small ribosomal subunit protein uS15 (89 aa).

Basic and acidic residues predominate over residues 1–21 (MALSKEQKTETLKEFGLHETD). The disordered stretch occupies residues 1 to 22 (MALSKEQKTETLKEFGLHETDT).

Belongs to the universal ribosomal protein uS15 family. In terms of assembly, part of the 30S ribosomal subunit. Forms a bridge to the 50S subunit in the 70S ribosome, contacting the 23S rRNA.

Its function is as follows. One of the primary rRNA binding proteins, it binds directly to 16S rRNA where it helps nucleate assembly of the platform of the 30S subunit by binding and bridging several RNA helices of the 16S rRNA. Functionally, forms an intersubunit bridge (bridge B4) with the 23S rRNA of the 50S subunit in the ribosome. The polypeptide is Small ribosomal subunit protein uS15 (Corynebacterium jeikeium (strain K411)).